A 296-amino-acid polypeptide reads, in one-letter code: ADP-dependent (S)-NAD(P)H-hydrate dehydratase (296 aa).

The YjeF C-terminal domain maps to 18-292; sequence TALRFPHVFK…PAARWLRNRI (275 aa). (6S)-NADPHX is bound by residues Ala-53, Gly-113, and His-165. AMP contacts are provided by residues 202–206 and Gly-231; that span reads KGHKT. Asp-232 serves as a coordination point for (6S)-NADPHX.

The protein belongs to the NnrD/CARKD family. As to quaternary structure, homotetramer. Mg(2+) serves as cofactor.

The catalysed reaction is (6S)-NADHX + ADP = AMP + phosphate + NADH + H(+). It carries out the reaction (6S)-NADPHX + ADP = AMP + phosphate + NADPH + H(+). Its function is as follows. Catalyzes the dehydration of the S-form of NAD(P)HX at the expense of ADP, which is converted to AMP. Together with NAD(P)HX epimerase, which catalyzes the epimerization of the S- and R-forms, the enzyme allows the repair of both epimers of NAD(P)HX, a damaged form of NAD(P)H that is a result of enzymatic or heat-dependent hydration. This chain is ADP-dependent (S)-NAD(P)H-hydrate dehydratase, found in Neisseria meningitidis serogroup B (strain ATCC BAA-335 / MC58).